A 606-amino-acid polypeptide reads, in one-letter code: Membrane protein insertase YidC (606 aa).

The chain crosses the membrane as a helical span at residues 8–28; it reads LILATALSFLVILVWFLLFPP. Over residues 59–78 the composition is skewed to low complexity; the sequence is TEAAPGAAPQTAATPTENAP. The disordered stretch occupies residues 59–79; that stretch reads TEAAPGAAPQTAATPTENAPR. 4 consecutive transmembrane segments (helical) span residues 378–398, 448–468, 506–526, and 542–562; these read MGVAIIVLTLLIKALLLPLAW, LPILLQIPIFFSLYKVIFVTI, SILALIFIGILPLLLGISMWL, and IFAWLPWVFMFMLGTFASGLI.

It belongs to the OXA1/ALB3/YidC family. Type 1 subfamily. As to quaternary structure, interacts with the Sec translocase complex via SecD. Specifically interacts with transmembrane segments of nascent integral membrane proteins during membrane integration.

The protein localises to the cell inner membrane. Functionally, required for the insertion and/or proper folding and/or complex formation of integral membrane proteins into the membrane. Involved in integration of membrane proteins that insert both dependently and independently of the Sec translocase complex, as well as at least some lipoproteins. Aids folding of multispanning membrane proteins. The polypeptide is Membrane protein insertase YidC (Dinoroseobacter shibae (strain DSM 16493 / NCIMB 14021 / DFL 12)).